The chain runs to 58 residues: MNMKMNKCPDCKIYTMEDACPQCGGELKVIYPPKFSIEDKYGKYRRILKKEAMNKKDD.

It belongs to the NOP10 family.

Functionally, involved in ribosome biogenesis; more specifically in 18S rRNA pseudouridylation and in cleavage of pre-rRNA. In Methanobrevibacter smithii (strain ATCC 35061 / DSM 861 / OCM 144 / PS), this protein is Ribosome biogenesis protein Nop10.